The chain runs to 386 residues: Transcription factor GTE1 (386 aa).

Disordered regions lie at residues 66 to 106 (GAAQ…KHVS) and 340 to 386 (ANKS…AKKA). Over residues 68-78 (AQTNTSKSNSG) the composition is skewed to polar residues. Residues 105–211 (VSSPDLMRQF…EKFEEKWLLI (107 aa)) enclose the Bromo domain. The region spanning 263 to 344 (RESVVQRCRK…EALKAANKSS (82 aa)) is the NET domain. Low complexity predominate over residues 345-358 (GGTNAQNNNNTGTG).

As to expression, barely detectable in stems, leaves, siliques, and dry seeds, but was present at considerable levels in roots, flowers and imbibited seeds.

It is found in the nucleus. Transcription activator that plays a role in the promotion of seed germination by both negatively and positively regulating the abscisic acid (ABA) and phytochrome A (phyA) transduction pathways, respectively. In Arabidopsis thaliana (Mouse-ear cress), this protein is Transcription factor GTE1 (GTE1).